Here is a 506-residue protein sequence, read N- to C-terminus: Histidine ammonia-lyase (506 aa).

A cross-link (5-imidazolinone (Ala-Gly)) is located at residues 143 to 145 (ASG). A 2,3-didehydroalanine (Ser) modification is found at Ser144.

It belongs to the PAL/histidase family. Post-translationally, contains an active site 4-methylidene-imidazol-5-one (MIO), which is formed autocatalytically by cyclization and dehydration of residues Ala-Ser-Gly.

It is found in the cytoplasm. It carries out the reaction L-histidine = trans-urocanate + NH4(+). The protein operates within amino-acid degradation; L-histidine degradation into L-glutamate; N-formimidoyl-L-glutamate from L-histidine: step 1/3. In Salmonella schwarzengrund (strain CVM19633), this protein is Histidine ammonia-lyase.